A 248-amino-acid polypeptide reads, in one-letter code: uncharacterized protein (248 aa).

The ABC transporter domain maps to 7 to 246 (VQLSNLSWTF…PASTILLPTS (240 aa)). Residue 43-50 (GQSGSGKS) participates in ATP binding.

This sequence belongs to the ABC transporter superfamily.

This is an uncharacterized protein from Mycobacterium tuberculosis (strain CDC 1551 / Oshkosh).